A 339-amino-acid chain; its full sequence is tRNA N6-adenosine threonylcarbamoyltransferase (339 aa).

Fe cation-binding residues include H115 and H119. Residues 136-140 (LISGG), D168, E185, and S265 each bind substrate. Position 293 (D293) interacts with Fe cation.

The protein belongs to the KAE1 / TsaD family. Requires Fe(2+) as cofactor.

The protein localises to the cytoplasm. The catalysed reaction is L-threonylcarbamoyladenylate + adenosine(37) in tRNA = N(6)-L-threonylcarbamoyladenosine(37) in tRNA + AMP + H(+). Its function is as follows. Required for the formation of a threonylcarbamoyl group on adenosine at position 37 (t(6)A37) in tRNAs that read codons beginning with adenine. Is probably involved in the transfer of the threonylcarbamoyl moiety of threonylcarbamoyl-AMP (TC-AMP) to the N6 group of A37. This chain is tRNA N6-adenosine threonylcarbamoyltransferase, found in Pyrobaculum calidifontis (strain DSM 21063 / JCM 11548 / VA1).